A 141-amino-acid polypeptide reads, in one-letter code: Fluoride-specific ion channel FluC 1 (141 aa).

Transmembrane regions (helical) follow at residues 12 to 32 (LYALIAAGSVIGGCARYLVGV), 44 to 64 (WATLFVNVTGSFVIGFYAAIA), 79 to 99 (FVMTGICGGYTTFSGFSLETF), and 107 to 127 (ALAALINLGVSPMSWLVAVWL). Na(+) contacts are provided by G86 and T89.

Belongs to the fluoride channel Fluc/FEX (TC 1.A.43) family.

The protein resides in the cell inner membrane. It carries out the reaction fluoride(in) = fluoride(out). With respect to regulation, na(+) is not transported, but it plays an essential structural role and its presence is essential for fluoride channel function. Its function is as follows. Fluoride-specific ion channel. Important for reducing fluoride concentration in the cell, thus reducing its toxicity. The protein is Fluoride-specific ion channel FluC 1 of Rhodopseudomonas palustris (strain BisB18).